We begin with the raw amino-acid sequence, 1581 residues long: Rho guanine nucleotide exchange factor 5 (1581 aa).

6 disordered regions span residues glutamate 25–histidine 54, valine 159–glutamine 274, leucine 316–isoleucine 643, serine 659–valine 700, histidine 741–tyrosine 810, and valine 829–aspartate 1051. Over residues glutamine 41–histidine 54 the composition is skewed to basic and acidic residues. Polar residues predominate over residues lysine 204–leucine 221. Residues glycine 228–glutamate 241 are compositionally biased toward acidic residues. 2 stretches are compositionally biased toward basic and acidic residues: residues glutamine 326–valine 336 and arginine 345–aspartate 380. A Phosphoserine modification is found at serine 446. Basic and acidic residues predominate over residues leucine 474–isoleucine 492. The segment covering serine 496–arginine 507 has biased composition (polar residues). Over residues proline 515–valine 531 the composition is skewed to low complexity. Polar residues-rich tracts occupy residues threonine 569 to proline 595, threonine 603 to phenylalanine 613, phenylalanine 662 to alanine 685, threonine 748 to serine 760, and threonine 779 to proline 791. The span at valine 829–proline 843 shows a compositional bias: pro residues. Polar residues-rich tracts occupy residues proline 867 to arginine 881, glycine 889 to valine 905, and serine 912 to threonine 925. Serine 953 and serine 969 each carry phosphoserine. Basic and acidic residues predominate over residues lysine 975–glutamate 986. Serine 1029 and serine 1110 each carry phosphoserine. The DH domain maps to lysine 1158 to asparagine 1342. The region spanning leucine 1375–leucine 1488 is the PH domain. The SH3 domain occupies tyrosine 1494–asparagine 1555.

In terms of assembly, interacts with SRC. Forms a ternary complex with SRC and the PI3K 85 kDa subunit. Interacts with and is activated by the heterodimer formed by GNB1 and GNG2. Interacts with ODAM (via C-terminus). Interacts with RHOA. In terms of processing, activation of SRC induces tyrosine phosphorylation of ARHGEF5.

It localises to the nucleus. It is found in the cytoplasm. The protein resides in the cell projection. Its subcellular location is the podosome. Functionally, guanine nucleotide exchange factor which activates Rho GTPases. Strongly activates RHOA. Also strongly activates RHOB, weakly activates RHOC and RHOG and shows no effect on RHOD, RHOV, RHOQ or RAC1. Involved in regulation of cell shape and actin cytoskeletal organization. Plays a role in actin organization by generating a loss of actin stress fibers and the formation of membrane ruffles and filopodia. Required for SRC-induced podosome formation. Involved in positive regulation of immature dendritic cell migration. This is Rho guanine nucleotide exchange factor 5 from Mus musculus (Mouse).